The primary structure comprises 1677 residues: Pentafunctional AROM polypeptide (1677 aa).

The 3-dehydroquinate synthase stretch occupies residues 1–394 (MAVADDTKAD…YEQKASIVED (394 aa)). NAD(+) contacts are provided by residues 50–52 (DDN), 89–92 (ETSK), 120–122 (GGV), and Asp125. Residue Arg136 coordinates 7-phospho-2-dehydro-3-deoxy-D-arabino-heptonate. Residue 145 to 146 (TT) participates in NAD(+) binding. Residues Asp152 and Lys158 each contribute to the 7-phospho-2-dehydro-3-deoxy-D-arabino-heptonate site. Lys167 lines the NAD(+) pocket. Asn168 lines the 7-phospho-2-dehydro-3-deoxy-D-arabino-heptonate pocket. NAD(+) contacts are provided by residues 185–188 (YLET) and Asn196. Glu200 contacts Zn(2+). Residues 200 to 203 (EVVK) and Lys260 contribute to the 7-phospho-2-dehydro-3-deoxy-D-arabino-heptonate site. The active-site Proton acceptor; for 3-dehydroquinate synthase activity is the Glu270. 7-phospho-2-dehydro-3-deoxy-D-arabino-heptonate-binding positions include 274–278 (RNLVN) and His281. His281 is a Zn(2+) binding site. The active-site Proton acceptor; for 3-dehydroquinate synthase activity is the His285. 7-phospho-2-dehydro-3-deoxy-D-arabino-heptonate is bound by residues His297 and Lys366. Position 297 (His297) interacts with Zn(2+). Positions 407–858 (VVPSIPTGNV…WDDLENKIGI (452 aa)) are EPSP synthase. Residue Cys840 is the For EPSP synthase activity of the active site. The shikimate kinase stretch occupies residues 885-1113 (NSSILLIGMR…GQQRRTYFLC (229 aa)). Position 892–899 (892–899 (GMRGTGKT)) interacts with ATP. A 3-dehydroquinase region spans residues 1114–1341 (LTYPDVRHAF…AAPGQLSFKQ (228 aa)). His1243 serves as the catalytic Proton acceptor; for 3-dehydroquinate dehydratase activity. The Schiff-base intermediate with substrate; for 3-dehydroquinate dehydratase activity role is filled by Lys1271. The shikimate dehydrogenase stretch occupies residues 1354–1677 (SKHFHLFGTP…TRVWEKYGEV (324 aa)).

This sequence in the N-terminal section; belongs to the sugar phosphate cyclases superfamily. Dehydroquinate synthase family. In the 2nd section; belongs to the EPSP synthase family. The protein in the 3rd section; belongs to the shikimate kinase family. It in the 4th section; belongs to the type-I 3-dehydroquinase family. This sequence in the C-terminal section; belongs to the shikimate dehydrogenase family. As to quaternary structure, homodimer. Zn(2+) is required as a cofactor.

It localises to the cytoplasm. It catalyses the reaction 7-phospho-2-dehydro-3-deoxy-D-arabino-heptonate = 3-dehydroquinate + phosphate. The catalysed reaction is 3-dehydroquinate = 3-dehydroshikimate + H2O. The enzyme catalyses shikimate + NADP(+) = 3-dehydroshikimate + NADPH + H(+). It carries out the reaction shikimate + ATP = 3-phosphoshikimate + ADP + H(+). It catalyses the reaction 3-phosphoshikimate + phosphoenolpyruvate = 5-O-(1-carboxyvinyl)-3-phosphoshikimate + phosphate. It participates in metabolic intermediate biosynthesis; chorismate biosynthesis; chorismate from D-erythrose 4-phosphate and phosphoenolpyruvate: step 2/7. Its pathway is metabolic intermediate biosynthesis; chorismate biosynthesis; chorismate from D-erythrose 4-phosphate and phosphoenolpyruvate: step 3/7. The protein operates within metabolic intermediate biosynthesis; chorismate biosynthesis; chorismate from D-erythrose 4-phosphate and phosphoenolpyruvate: step 4/7. It functions in the pathway metabolic intermediate biosynthesis; chorismate biosynthesis; chorismate from D-erythrose 4-phosphate and phosphoenolpyruvate: step 5/7. It participates in metabolic intermediate biosynthesis; chorismate biosynthesis; chorismate from D-erythrose 4-phosphate and phosphoenolpyruvate: step 6/7. Functionally, the AROM polypeptide catalyzes 5 consecutive enzymatic reactions in prechorismate polyaromatic amino acid biosynthesis. This is Pentafunctional AROM polypeptide from Coprinopsis cinerea (strain Okayama-7 / 130 / ATCC MYA-4618 / FGSC 9003) (Inky cap fungus).